A 200-amino-acid polypeptide reads, in one-letter code: HVA22-like protein k (200 aa).

The disordered stretch occupies residues 176 to 200; the sequence is LGEIANGSPVSETNSDSESDSNHED.

It belongs to the DP1 family.

This Arabidopsis thaliana (Mouse-ear cress) protein is HVA22-like protein k (HVA22K).